Consider the following 287-residue polypeptide: Protease HtpX (287 aa).

The next 2 membrane-spanning stretches (helical) occupy residues 4–24 and 33–53; these read IFLL…VMSI and GGLL…SLAI. His139 contributes to the Zn(2+) binding site. Glu140 is a catalytic residue. A Zn(2+)-binding site is contributed by His143. The next 2 membrane-spanning stretches (helical) occupy residues 154 to 174 and 195 to 215; these read LIQG…AGII and AVVF…VAYF. Glu220 lines the Zn(2+) pocket.

Belongs to the peptidase M48B family. Zn(2+) is required as a cofactor.

The protein localises to the cell inner membrane. The chain is Protease HtpX from Shewanella baltica (strain OS185).